A 301-amino-acid chain; its full sequence is Acetylglutamate kinase (301 aa).

Substrate-binding positions include 76-77 (GG), arginine 98, and asparagine 192.

It belongs to the acetylglutamate kinase family. ArgB subfamily.

Its subcellular location is the cytoplasm. The catalysed reaction is N-acetyl-L-glutamate + ATP = N-acetyl-L-glutamyl 5-phosphate + ADP. It functions in the pathway amino-acid biosynthesis; L-arginine biosynthesis; N(2)-acetyl-L-ornithine from L-glutamate: step 2/4. Its function is as follows. Catalyzes the ATP-dependent phosphorylation of N-acetyl-L-glutamate. This Chlorobaculum parvum (strain DSM 263 / NCIMB 8327) (Chlorobium vibrioforme subsp. thiosulfatophilum) protein is Acetylglutamate kinase.